The sequence spans 101 residues: Large ribosomal subunit protein uL24 (101 aa).

The protein belongs to the universal ribosomal protein uL24 family. In terms of assembly, part of the 50S ribosomal subunit.

In terms of biological role, one of two assembly initiator proteins, it binds directly to the 5'-end of the 23S rRNA, where it nucleates assembly of the 50S subunit. One of the proteins that surrounds the polypeptide exit tunnel on the outside of the subunit. The sequence is that of Large ribosomal subunit protein uL24 from Streptococcus thermophilus (strain CNRZ 1066).